The following is an 884-amino-acid chain: E3 ubiquitin-protein ligase BRE1-like 1 (884 aa).

Positions 1–37 (MGSTGEPDRKRRLSSSVAPGGGAPVSPAKRLAVAPTS) are disordered. Residues 49-86 (YKNQKLSEQLEAHKFEYRALENKFAGLKEKQRTHNETL) are a coiled coil. The segment at 107-127 (KSGSPNSSPGSGHNNVQKDGT) is disordered. The span at 108 to 121 (SGSPNSSPGSGHNN) shows a compositional bias: low complexity. 4 coiled-coil regions span residues 216–541 (LNNV…ELKL), 580–663 (SKLE…LQQI), 696–762 (RNLQ…QSLD), and 789–827 (KKRI…KEYR). The RING-type zinc-finger motif lies at 832–871 (CGICHDRQKEVVITKCYHLFCNQCIQKSLGNRQRRCPSCS).

Belongs to the BRE1 family. In terms of assembly, interacts with SKIPA. Interacts with HUB2.

Its subcellular location is the nucleus. The enzyme catalyses S-ubiquitinyl-[E2 ubiquitin-conjugating enzyme]-L-cysteine + [acceptor protein]-L-lysine = [E2 ubiquitin-conjugating enzyme]-L-cysteine + N(6)-ubiquitinyl-[acceptor protein]-L-lysine.. The protein operates within protein modification; protein ubiquitination. In terms of biological role, E3 ubiquitin-protein ligase that monoubiquitinates H2B to form H2BK143ub1. H2BK143ub1 gives a specific tag for epigenetic transcriptional activation and is a prerequisite for H3 Lys-4 methylation (H3K4me). It thereby plays a central role in histone code and gene regulation. H2B monoubiquitination (H2BK143ub1), mediated by HUB1, modulates transcriptional regulation of anther development, likely by promoting histone H3K4 dimethylation (H3K4me2) in the chromatin of the key tapetum degradation-related genes C4, CP1 and UDT1. The protein is E3 ubiquitin-protein ligase BRE1-like 1 of Oryza sativa subsp. japonica (Rice).